Here is a 358-residue protein sequence, read N- to C-terminus: Probable BOI-related E3 ubiquitin-protein ligase 2 (358 aa).

Residues 171–234 are a coiled coil; the sequence is KYEIEEKRKR…NQIWRDLAQT (64 aa). Residues 214 to 250 form a WRD domain region; it reads LEERVKSLSIENQIWRDLAQTNEATANHLRTNLEHVL. The RING-type zinc finger occupies 310–345; that stretch reads CRNCGEEESCVLLLPCRHLCLCGVCGSSVHTCPICT.

In terms of assembly, interacts with the DELLA proteins GAI, RGA, RGL1, RGL2 and RGL3.

It catalyses the reaction S-ubiquitinyl-[E2 ubiquitin-conjugating enzyme]-L-cysteine + [acceptor protein]-L-lysine = [E2 ubiquitin-conjugating enzyme]-L-cysteine + N(6)-ubiquitinyl-[acceptor protein]-L-lysine.. The protein operates within protein degradation; proteasomal ubiquitin-dependent pathway. Its function is as follows. Probable E3 ubiquitin-protein ligase. Has no effect on the stability of the DELLA proteins. The protein is Probable BOI-related E3 ubiquitin-protein ligase 2 (BRG2) of Arabidopsis thaliana (Mouse-ear cress).